The chain runs to 177 residues: Endoribonuclease YbeY (177 aa).

The Zn(2+) site is built by histidine 114, histidine 118, and histidine 124. The segment at 154 to 177 (SYPEAIPTNPAPRRQASSSAGHIE) is disordered. A compositionally biased stretch (polar residues) spans 168 to 177 (QASSSAGHIE).

Belongs to the endoribonuclease YbeY family. Zn(2+) is required as a cofactor.

It is found in the cytoplasm. In terms of biological role, single strand-specific metallo-endoribonuclease involved in late-stage 70S ribosome quality control and in maturation of the 3' terminus of the 16S rRNA. The chain is Endoribonuclease YbeY from Cellvibrio japonicus (strain Ueda107) (Pseudomonas fluorescens subsp. cellulosa).